The following is a 103-amino-acid chain: Small ribosomal subunit protein uS10 (103 aa).

Belongs to the universal ribosomal protein uS10 family. As to quaternary structure, part of the 30S ribosomal subunit.

Involved in the binding of tRNA to the ribosomes. This Shewanella halifaxensis (strain HAW-EB4) protein is Small ribosomal subunit protein uS10.